A 281-amino-acid chain; its full sequence is Probable endonuclease 4 (281 aa).

Positions 68, 108, 145, 179, 182, 216, 229, 231, and 261 each coordinate Zn(2+).

The protein belongs to the AP endonuclease 2 family. The cofactor is Zn(2+).

It catalyses the reaction Endonucleolytic cleavage to 5'-phosphooligonucleotide end-products.. Endonuclease IV plays a role in DNA repair. It cleaves phosphodiester bonds at apurinic or apyrimidinic (AP) sites, generating a 3'-hydroxyl group and a 5'-terminal sugar phosphate. This Trichlorobacter lovleyi (strain ATCC BAA-1151 / DSM 17278 / SZ) (Geobacter lovleyi) protein is Probable endonuclease 4.